Reading from the N-terminus, the 209-residue chain is Transcription factor atf31 (209 aa).

Polar residues predominate over residues 90-103 (SKSPSIISEASHNS). Residues 90 to 133 (SKSPSIISEASHNSPSRELDDSGDENTSKLTGTKQSMLKARNRQ) are disordered. Positions 121 to 184 (GTKQSMLKAR…IKLRTLVFAH (64 aa)) constitute a bZIP domain. Positions 123–161 (KQSMLKARNRQAAQKCRIKKKKYLQTLQDQVNYYTSENK) are basic motif. The leucine-zipper stretch occupies residues 163-177 (LLQSANDLREEIIKL).

Belongs to the bZIP family.

The protein resides in the nucleus. The sequence is that of Transcription factor atf31 (atf31) from Schizosaccharomyces pombe (strain 972 / ATCC 24843) (Fission yeast).